A 3326-amino-acid polypeptide reads, in one-letter code: Deoxyribonuclease CdiA (3326 aa).

Residues 36–342 (TADGVLTSGG…ARGALTLTGS (307 aa)) are two-partner system transport domain (TPS). The tract at residues 343–1396 (YAGAGSLYSD…ITVRTGTLTN (1054 aa)) is FHA-1. The segment at 1397–1765 (QREGLVVTES…QQLGSPSLTD (369 aa)) is receptor binding domain (RBD). Residues 1766 to 1951 (YPLPTSQSGL…LAQADKTNLQ (186 aa)) are YP domain. The periplasmic FHA-1 repeat (pFR) stretch occupies residues 1959 to 2097 (SVSLSAGGDI…AGGPLQLAAG (139 aa)). Positions 2125 to 2660 (QGLVQSTVAS…SNRYDSKQTS (536 aa)) are FHA-2. The VENN CT cleavage motif signature appears at 3060–3063 (VENN). The interval 3060–3326 (VENNSLGDIA…DRNRQIGVIK (267 aa)) is CT domain.

This sequence in the N-terminal section; belongs to the CdiA toxin family. The C-terminal (CT) domain interacts with cognate CdiI but not non-cognate CdiI from E.coli strain 536 / UPEC.

The protein resides in the target cell. It is found in the target cell cytoplasm. Functionally, toxic component of a toxin-immunity protein module, which functions as a cellular contact-dependent growth inhibition (CDI) system. CDI modules allow bacteria to communicate with and inhibit the growth of closely related neighboring bacteria in a contact-dependent fashion. CDI is neutralized by its cognate immunity protein CdiI, but not by non-cognate CdiI from other bacteria. The C-terminal domain (CT) has strong DNase activity; this activity is inhibited by cognate CdiI. The CdiA protein is thought to be exported from the cell through the central lumen of CdiB, the other half of its two-partner system (TPS). The TPS domain probably remains associated with CdiB while the FHA-1 domain forms an extended filament with the receptor-binding domain (RBD) at its extremity; in the secretion arrested state the C-terminus of the RBD and YP domains form a hairpin-like structure as the FHA-2, PT and CT domains are periplasmic. The YP domain is probably responsible for this arrest at the point where it re-enters the host cell periplasm. Upon binding to a target cell outer membrane receptor a signal is transmitted to activate secretion. The filament elongates slightly, the rest of CdiA is secreted and the FHA-2 domain becomes stably associated with the target cell's outer membrane where it facilitates entry of the toxic CT domain into the target cell periplasm. From there the toxic CT domain is cleaved and gains access to the target cell cytoplasm via an inner membrane protein. This is Deoxyribonuclease CdiA from Dickeya dadantii (strain 3937) (Erwinia chrysanthemi (strain 3937)).